The chain runs to 459 residues: Protein ABHD15 (459 aa).

The N-terminal stretch at 1-28 is a signal peptide; the sequence is MPPWAAALALLLAALALLLLRPWKRAVG. Catalysis depends on charge relay system residues Asp351 and His382. Phosphoserine is present on Ser425.

This sequence belongs to the AB hydrolase superfamily. AB hydrolase 4 family. Interacts with PDE3B; this interaction regulates PDE3B's stability and expression and, thereby, impacts the antilipolytic action of insulin. In terms of tissue distribution, mainly expressed in adipocytes and adipose depots, followed by a weak expression in liver and pancreas. In white adipose tissue (WAT), only expressed in mature adipocytes and primary adipocytes differentiated from stromal vascular cells (SVCs), but not in undifferentiated SVCs.

It localises to the secreted. Its function is as follows. May regulate adipocyte lipolysis and liver lipid accumulation. This chain is Protein ABHD15, found in Mus musculus (Mouse).